The primary structure comprises 792 residues: MITVNPDGKIMVRRCLVTLRPFRLFVLGIGFFTLCFLMTSLGGQFSARRLGDSPFTIRTEVPGSPESRGALRKMSDLLELMVKRMDMLARLENSSELHRTASVAHLAADRLTPGASLIERIQAIAQNVSDIAVKVDQILRHSLILHSKVSEGRRDQCEAPSDPKFPDCSGKVEWMRARWTSDPCYAFFGVDGTECSFLIYLSEVEWFCPPLPWRNQTAARTAPKSLPRVQAVFRSNLSHLLELMGSGKESLIFMKKRTRRFTAQWTKAAKYLAQKLGDIRRDQKQILVHIGFLTEESGDVFSPRVLKGGPLGEMVQWADILAALYVLGHSLRITVSLKELQSNLGVPPGRGNCPLTVPLPFDLIYTDYHGLQQMKQHMGLSFKKYRCRIRVIDTFGTEPAYNHEEYATLHGYRTNWGYWNLNPKQFMTMFPHTPDNSFMGFVSEELNETEKQLIKDGKASNMAVVYGKEASIWKLQGKEKFLAVLNKYMEIHGTVYYESQRPPEVPAFVKNHGLLPQPEFQQLLRKAKLFIGFGFPYEGPAPLEAIANGCIFLQSRFSPPHSSLNHEFFRGKPTSREVFSQHPYAENFIGKPHVWTVDYNNSDEFETAIKAIMNTQVDPYLPYEYTCAGMLERINAYIQHQDFCVGPSPLPPGASTAQSPFVLAPNATHLEWAQNISSVPGAWPPTHSLRAWLAAPGRACTDACLDHGLICEPSFFPFLNSQNSFLKLQVPCDSTEWEMHHLYPAFAQPGQECYLQKEPLLFSCAGASTKYQRLCPCRDFRKGQVALCQGCL.

Residues 1–24 (MITVNPDGKIMVRRCLVTLRPFRL) are Cytoplasmic-facing. Residues 25 to 45 (FVLGIGFFTLCFLMTSLGGQF) form a helical; Signal-anchor for type II membrane protein membrane-spanning segment. Residues 46–792 (SARRLGDSPF…GQVALCQGCL (747 aa)) lie on the Lumenal side of the membrane. The N-linked (GlcNAc...) asparagine glycan is linked to Asn127. Cystine bridges form between Cys157-Cys195, Cys168-Cys208, Cys184-Cys353, and Cys387-Cys644. N-linked (GlcNAc...) asparagine glycosylation is present at Asn675. 5 cysteine pairs are disulfide-bonded: Cys700-Cys775, Cys704-Cys777, Cys711-Cys764, Cys732-Cys753, and Cys788-Cys791.

The protein belongs to the glycosyltransferase 18 family. Mn(2+) is required as a cofactor. Present in brain (at protein level). Predominantly expressed in hippocampus, superficial layers of the brain cortex, striatum, nucleus accumbens, a subset of nuclei in the thalamus, inferior colliculus, brain stem and cerebellum.

It localises to the golgi apparatus membrane. The catalysed reaction is N(4)-{beta-D-GlcNAc-(1-&gt;2)-[beta-D-GlcNAc-(1-&gt;4)]-alpha-D-Man-(1-&gt;3)-[beta-D-GlcNAc-(1-&gt;2)-alpha-D-Man-(1-&gt;6)]-beta-D-Man-(1-&gt;4)-beta-D-GlcNAc-(1-&gt;4)-beta-D-GlcNAc}-L-asparaginyl-[protein] + UDP-N-acetyl-alpha-D-glucosamine = N(4)-{beta-D-GlcNAc-(1-&gt;2)-[beta-D-GlcNAc-(1-&gt;4)]-alpha-D-Man-(1-&gt;3)-[beta-D-GlcNAc-(1-&gt;2)-[beta-D-GlcNAc-(1-&gt;6)]-alpha-D-Man-(1-&gt;6)]-beta-D-Man-(1-&gt;4)-beta-D-GlcNAc-(1-&gt;4)-beta-D-GlcNAc}-L-asparaginyl-[protein] + UDP + H(+). It catalyses the reaction 3-O-[N-acetyl-beta-D-glucosaminyl-(1-&gt;2)-alpha-D-mannosyl]-L-seryl-[protein] + UDP-N-acetyl-alpha-D-glucosamine = O(3)-{N-acetyl-beta-D-glucosaminyl-(1-&gt;2)-[N-acetyl-beta-D-glucosaminyl-(1-&gt;6)]-alpha-D-mannosyl}-L-seryl-[protein] + UDP + H(+). It carries out the reaction 3-O-[N-acetyl-beta-D-glucosaminyl-(1-&gt;2)-alpha-D-mannosyl]-L-threonyl-[protein] + UDP-N-acetyl-alpha-D-glucosamine = O(3)-{N-acetyl-beta-D-glucosaminyl-(1-&gt;2)-[N-acetyl-beta-D-glucosaminyl-(1-&gt;6)]-alpha-D-mannosyl}-L-threonyl-[protein] + UDP + H(+). It functions in the pathway protein modification; protein glycosylation. In terms of biological role, glycosyltransferase that acts on alpha-linked mannose of N-glycans and O-mannosyl glycans. Catalyzes the transfer of N-acetylglucosamine (GlcNAc) to the beta 1-6 linkage of the mannose residue of GlcNAc-beta1,2-Man-alpha on both the alpha1,3- and alpha1,6-linked mannose arms in the core structure of N-glycan. Also acts on the GlcNAc-beta1,2-Man-alpha1-Ser/Thr moiety, forming a 2,6-branched structure in brain O-mannosyl glycan. Plays an active role in modulating integrin and laminin-dependent adhesion and migration of neuronal cells via its activity in the O-mannosyl glycan pathway. The sequence is that of Alpha-1,6-mannosylglycoprotein 6-beta-N-acetylglucosaminyltransferase B (Mgat5b) from Mus musculus (Mouse).